The chain runs to 357 residues: Glucose 1-dehydrogenase (357 aa).

Residue Asp-38 participates in Zn(2+) binding. Positions 40 and 49 each coordinate substrate. The Zn(2+) site is built by His-63 and Glu-64. The substrate site is built by Glu-114 and Glu-150. Glu-150 is a Zn(2+) binding site. Residues Asn-181–Leu-184, Arg-207–Arg-208, Ser-228, Leu-272–Val-274, and Ser-301–Asn-303 contribute to the NADP(+) site. Asn-303 is a substrate binding site.

Belongs to the zinc-containing alcohol dehydrogenase family. Glucose 1-dehydrogenase subfamily. As to quaternary structure, homodimer. It depends on Zn(2+) as a cofactor.

The catalysed reaction is D-glucose + NAD(+) = D-glucono-1,5-lactone + NADH + H(+). It carries out the reaction D-glucose + NADP(+) = D-glucono-1,5-lactone + NADPH + H(+). Its activity is regulated as follows. Activated by molar concentrations of KCl or NaCl. Inhibited by EDTA in vitro. Functionally, catalyzes the NAD(P)(+)-dependent oxidation of D-glucose to D-gluconate. Displays broad substrate specificity since it is able to catalyze the oxidation of a number of alternative aldose sugars, such as D-xylose, D-galactose, and D-fucose, to the corresponding glyconate. Can utilize both NAD(+) and NADP(+) as electron acceptor, with a preference for NADP(+). Physiologically, seems to be involved in the degradation of glucose through a modified Entner-Doudoroff pathway. The polypeptide is Glucose 1-dehydrogenase (Haloferax mediterranei (strain ATCC 33500 / DSM 1411 / JCM 8866 / NBRC 14739 / NCIMB 2177 / R-4) (Halobacterium mediterranei)).